The chain runs to 266 residues: Beta-lactamase OXA-19 (266 aa).

A signal peptide spans 1–20 (MKTFAAYVITACLSSTALAS). S67 (acyl-ester intermediate) is an active-site residue. The residue at position 70 (K70) is an N6-carboxylysine. 205 to 207 (KTG) is a substrate binding site.

Belongs to the class-D beta-lactamase family.

The catalysed reaction is a beta-lactam + H2O = a substituted beta-amino acid. The polypeptide is Beta-lactamase OXA-19 (bla) (Pseudomonas aeruginosa).